Consider the following 199-residue polypeptide: Transgelin-3 (199 aa).

Residues 24–136 (ADLENKLVDW…RTLMALGSVA (113 aa)) enclose the Calponin-homology (CH) domain. Position 163 is a phosphoserine (Ser163). Residues 174–199 (IGLQMGSNKGASQAGMTGYGMPRQIM) form a Calponin-like repeat. The span at 176–188 (LQMGSNKGASQAG) shows a compositional bias: polar residues. The tract at residues 176–199 (LQMGSNKGASQAGMTGYGMPRQIM) is disordered.

Belongs to the calponin family.

This Pongo abelii (Sumatran orangutan) protein is Transgelin-3 (TAGLN3).